The following is a 310-amino-acid chain: Carbamate kinase (310 aa).

The protein belongs to the carbamate kinase family. In terms of assembly, homodimer.

Its subcellular location is the cytoplasm. The catalysed reaction is hydrogencarbonate + NH4(+) + ATP = carbamoyl phosphate + ADP + H2O + H(+). It functions in the pathway amino-acid degradation; L-arginine degradation via ADI pathway. In Haemophilus influenzae (strain ATCC 51907 / DSM 11121 / KW20 / Rd), this protein is Carbamate kinase.